The primary structure comprises 338 residues: Phenylalanine--tRNA ligase alpha subunit (338 aa).

Position 252 (E252) interacts with Mg(2+).

This sequence belongs to the class-II aminoacyl-tRNA synthetase family. Phe-tRNA synthetase alpha subunit type 1 subfamily. As to quaternary structure, tetramer of two alpha and two beta subunits. The cofactor is Mg(2+).

It localises to the cytoplasm. The enzyme catalyses tRNA(Phe) + L-phenylalanine + ATP = L-phenylalanyl-tRNA(Phe) + AMP + diphosphate + H(+). The sequence is that of Phenylalanine--tRNA ligase alpha subunit (pheS) from Aquifex aeolicus (strain VF5).